A 180-amino-acid chain; its full sequence is ATP synthase subunit delta (180 aa).

It belongs to the ATPase delta chain family. As to quaternary structure, F-type ATPases have 2 components, F(1) - the catalytic core - and F(0) - the membrane proton channel. F(1) has five subunits: alpha(3), beta(3), gamma(1), delta(1), epsilon(1). F(0) has three main subunits: a(1), b(2) and c(10-14). The alpha and beta chains form an alternating ring which encloses part of the gamma chain. F(1) is attached to F(0) by a central stalk formed by the gamma and epsilon chains, while a peripheral stalk is formed by the delta and b chains.

It localises to the cell inner membrane. Functionally, f(1)F(0) ATP synthase produces ATP from ADP in the presence of a proton or sodium gradient. F-type ATPases consist of two structural domains, F(1) containing the extramembraneous catalytic core and F(0) containing the membrane proton channel, linked together by a central stalk and a peripheral stalk. During catalysis, ATP synthesis in the catalytic domain of F(1) is coupled via a rotary mechanism of the central stalk subunits to proton translocation. Its function is as follows. This protein is part of the stalk that links CF(0) to CF(1). It either transmits conformational changes from CF(0) to CF(1) or is implicated in proton conduction. The sequence is that of ATP synthase subunit delta from Trichlorobacter lovleyi (strain ATCC BAA-1151 / DSM 17278 / SZ) (Geobacter lovleyi).